Consider the following 235-residue polypeptide: Sugar fermentation stimulation protein homolog (235 aa).

This sequence belongs to the SfsA family.

The chain is Sugar fermentation stimulation protein homolog from Ectopseudomonas mendocina (strain ymp) (Pseudomonas mendocina).